Consider the following 342-residue polypeptide: L-threonine 3-dehydrogenase (342 aa).

Cys38 lines the Zn(2+) pocket. Active-site charge relay system residues include Thr40 and His43. Positions 63, 64, 93, 96, 99, and 107 each coordinate Zn(2+). NAD(+) is bound by residues Ile175, Asp195, Arg200, 262-264 (LGI), and 286-287 (IY).

It belongs to the zinc-containing alcohol dehydrogenase family. As to quaternary structure, homotetramer. It depends on Zn(2+) as a cofactor.

It is found in the cytoplasm. It carries out the reaction L-threonine + NAD(+) = (2S)-2-amino-3-oxobutanoate + NADH + H(+). Its pathway is amino-acid degradation; L-threonine degradation via oxydo-reductase pathway; glycine from L-threonine: step 1/2. In terms of biological role, catalyzes the NAD(+)-dependent oxidation of L-threonine to 2-amino-3-ketobutyrate. This chain is L-threonine 3-dehydrogenase, found in Burkholderia lata (strain ATCC 17760 / DSM 23089 / LMG 22485 / NCIMB 9086 / R18194 / 383).